A 1695-amino-acid chain; its full sequence is Sialoadhesin (1695 aa).

The signal sequence occupies residues 1 to 19 (MCVLFSLLLLASVFSLGQT). Residues 20-136 (TWGVSSPKNV…DVKGTTVTVT (117 aa)) enclose the Ig-like V-type domain. At 20-1639 (TWGVSSPKNV…ALHQLQLFQR (1620 aa)) the chain is on the extracellular side. Cystine bridges form between Cys-36–Cys-166, Cys-41–Cys-98, Cys-160–Cys-218, and Cys-263–Cys-306. N-acetylneuraminate-binding positions include Tyr-63, Arg-116, and 122–126 (SNRWL). Ig-like C2-type domains are found at residues 153-235 (GMER…YLQV), 239-321 (PKGV…SPLS), 326-406 (MAEV…SPLS), 416-508 (PDLT…LDFY), 509-594 (ANVA…TVLT), 602-701 (PTFT…ASFN), 704-781 (ATVL…AQLS), 795-890 (PKLS…FQVR), 894-973 (VQVS…APVS), 980-1079 (PRHV…ADFD), 1081-1161 (QAVR…RPVT), 1172-1264 (RLTY…MNPS), 1245-1337 (KANT…ASLQ), 1342-1439 (PRDA…RLLT), 1442-1520 (DIRV…ATTS), and 1534-1627 (PTLI…AYFG). The N-linked (GlcNAc...) asparagine glycan is linked to Asn-159. 3 N-linked (GlcNAc...) asparagine glycosylation sites follow: Asn-266, Asn-299, and Asn-340. Cystine bridges form between Cys-347-Cys-391 and Cys-434-Cys-492. N-linked (GlcNAc...) asparagine glycosylation is present at Asn-500. A disulfide bond links Cys-532 and Cys-576. Residue Asn-583 is glycosylated (N-linked (GlcNAc...) asparagine). Cys-625 and Cys-685 form a disulfide bridge. N-linked (GlcNAc...) asparagine glycans are attached at residues Asn-693, Asn-722, and Asn-737. 2 disulfide bridges follow: Cys-725–Cys-770 and Cys-813–Cys-872. A Cell attachment site motif is present at residues 827-829 (RGD). Asn-882 is a glycosylation site (N-linked (GlcNAc...) asparagine). Intrachain disulfides connect Cys-912/Cys-956 and Cys-1001/Cys-1063. 2 N-linked (GlcNAc...) asparagine glycosylation sites follow: Asn-1090 and Asn-1100. Intrachain disulfides connect Cys-1103/Cys-1145 and Cys-1189/Cys-1237. N-linked (GlcNAc...) asparagine glycosylation occurs at Asn-1247. 2 cysteine pairs are disulfide-bonded: Cys-1277-Cys-1320 and Cys-1363-Cys-1422. Residues Asn-1460 and Asn-1474 are each glycosylated (N-linked (GlcNAc...) asparagine). 2 disulfides stabilise this stretch: Cys-1463–Cys-1509 and Cys-1552–Cys-1611. A helical membrane pass occupies residues 1640-1660 (LLWVLGFLAGFLCLLLGLVAY). The Cytoplasmic portion of the chain corresponds to 1661–1695 (HTWRKKSSTKLNEDENSAEMATKKNTIQEEVVAAL).

This sequence belongs to the immunoglobulin superfamily. SIGLEC (sialic acid binding Ig-like lectin) family. As to quaternary structure, interacts with CLEC10A. In terms of tissue distribution, detected in lymph node in the subcapsular sinus, interfollicular regions, and T and B-cell boundary (at protein level). Expressed by macrophages in various tissues. Highest expression in spleen and lymph node with lower amounts in lung, liver, bone marrow, heart and skin. No expression in thymus, kidney, brain or small intestine.

The protein resides in the cell membrane. It is found in the secreted. In terms of biological role, macrophage-restricted adhesion molecule that mediates sialic-acid dependent binding to lymphocytes, including granulocytes, monocytes, natural killer cells, B-cells and CD8 T-cells. Plays a crucial role in limiting bacterial dissemination by engaging sialylated bacteria to promote effective phagocytosis and antigen presentation for the adaptive immune response. Mediates the uptake of various enveloped viruses via sialic acid recognition and subsequently induces the formation of intracellular compartments filled with virions (VCCs). In turn, enhances macrophage-to-T-cell transmission of several viruses including murine leukemia virus. Acts as an endocytic receptor mediating clathrin dependent endocytosis. Preferentially binds to alpha-2,3-linked sialic acid. Binds to SPN/CD43 on T-cells. May play a role in hemopoiesis. Plays a role in the inhibition of antiviral innate immune by promoting TBK1 degradation via TYROBP and TRIM27-mediated ubiquitination. The polypeptide is Sialoadhesin (Siglec1) (Mus musculus (Mouse)).